The sequence spans 288 residues: Glucose-1-phosphate thymidylyltransferase (288 aa).

Positions 108 and 223 each coordinate Mg(2+).

It belongs to the glucose-1-phosphate thymidylyltransferase family. As to quaternary structure, homotetramer. Mg(2+) is required as a cofactor.

It carries out the reaction dTTP + alpha-D-glucose 1-phosphate + H(+) = dTDP-alpha-D-glucose + diphosphate. Catalyzes the formation of dTDP-glucose, from dTTP and glucose 1-phosphate, as well as its pyrophosphorolysis. The sequence is that of Glucose-1-phosphate thymidylyltransferase (rmlA1) from Neisseria meningitidis serogroup A / serotype 4A (strain DSM 15465 / Z2491).